A 159-amino-acid polypeptide reads, in one-letter code: Cell number regulator 4 (159 aa).

The chain crosses the membrane as a helical span at residues 52–74 (LAGLLYCLLLHAGVAVVPCHCIY).

It belongs to the cornifelin family. As to expression, expressed in roots, coleoptiles, leaves, stalks, apical meristems, immature ears, endosperm, pericarp and tassel spikelets.

It is found in the membrane. This is Cell number regulator 4 (CNR4) from Zea mays (Maize).